The following is a 297-amino-acid chain: MNQKDTRKETLEFNKLQKRLRRNVGNAITDYNMIEEGDVVMACISGGKDSFAMLDILLNLQKAAPIKFEVVAVNLDQKQPGFPEHILPEYFETLNIPYYIVDKDTYSVVKEKVPEGKTTCGLCSRLRRGTLYSFAEKIGATKLALGHHMDDIVETMFLNMFHGSRLKAMPPKLRSDDGRNVVIRPLTYCREKDLIKYAEHKDFPIIPCNLCGSQENLQRQAIKAMLIDWDKKTPGRVEAIFKSIQNVSPSQLADRELFDFVNLPLDRDGSREEYEFSEAVVSSTNIDESLFIDVTNI.

The PP-loop motif motif lies at 45-50; that stretch reads SGGKDS. [4Fe-4S] cluster-binding residues include cysteine 120, cysteine 123, and cysteine 211.

The protein belongs to the TtcA family. Homodimer. It depends on Mg(2+) as a cofactor. Requires [4Fe-4S] cluster as cofactor.

It localises to the cytoplasm. It carries out the reaction cytidine(32) in tRNA + S-sulfanyl-L-cysteinyl-[cysteine desulfurase] + AH2 + ATP = 2-thiocytidine(32) in tRNA + L-cysteinyl-[cysteine desulfurase] + A + AMP + diphosphate + H(+). Its pathway is tRNA modification. Catalyzes the ATP-dependent 2-thiolation of cytidine in position 32 of tRNA, to form 2-thiocytidine (s(2)C32). The sulfur atoms are provided by the cysteine/cysteine desulfurase (IscS) system. This chain is tRNA-cytidine(32) 2-sulfurtransferase, found in Vibrio parahaemolyticus serotype O3:K6 (strain RIMD 2210633).